A 2005-amino-acid polypeptide reads, in one-letter code: Sodium channel protein type 2 subunit alpha (2005 aa).

The Cytoplasmic segment spans residues 1–129; that stretch reads MAQSVLVPPG…KLAIKILVHS (129 aa). Phosphoserine is present on Ser4. Residues 28–61 form a disordered region; the sequence is RIAEEKAKRPKQERKDEDDENGPKPNSDLEAGKS. Lys38 participates in a covalent cross-link: Glycyl lysine isopeptide (Lys-Gly) (interchain with G-Cter in SUMO1). An I repeat occupies 111 to 456; the sequence is ILTPFNPIRK…QQMLEQLKKQ (346 aa). Residues 130–148 form a helical membrane-spanning segment; sequence LFNMLIMCTILTNCVFMTM. Residues 149–155 lie on the Extracellular side of the membrane; that stretch reads SNPPDWT. Residues 156 to 176 form a helical membrane-spanning segment; the sequence is KNVEYTFTGIYTFESLIKILA. The Cytoplasmic portion of the chain corresponds to 177–190; that stretch reads RGFCLEDFTFLRDP. The chain crosses the membrane as a helical span at residues 191–208; the sequence is WNWLDFTVITFAYVTEFV. The Extracellular portion of the chain corresponds to 209–214; it reads DLGNVS. Asn212 carries an N-linked (GlcNAc...) asparagine glycan. Residues 215–231 traverse the membrane as a helical segment; that stretch reads ALRTFRVLRALKTISVI. The Cytoplasmic segment spans residues 232 to 250; sequence PGLKTIVGALIQSVKKLSD. A helical transmembrane segment spans residues 251–270; sequence VMILTVFCLSVFALIGLQLF. Topologically, residues 271–369 are extracellular; that stretch reads MGNLRNKCLQ…PNYGYTSFDT (99 aa). The cysteines at positions 278 and 338 are disulfide-linked. Asn285, Asn291, Asn297, Asn303, Asn308, and Asn340 each carry an N-linked (GlcNAc...) asparagine glycan. Residues 370–394 constitute an intramembrane region (pore-forming); sequence FSWAFLSLFRLMTQDFWENLYQLTL. Residues 395-401 lie on the Extracellular side of the membrane; it reads RAAGKTY. The chain crosses the membrane as a helical span at residues 402 to 422; that stretch reads MIFFVLVIFLGSFYLINLILA. Residues 423–759 lie on the Cytoplasmic side of the membrane; the sequence is VVAMAYEEQN…HLVNLVVMDP (337 aa). 17 positions are modified to phosphoserine: Ser468, Ser471, Ser484, Ser526, Ser528, Ser531, Ser553, Ser554, Ser558, Ser573, Ser576, Ser589, Ser610, Ser623, Ser686, Ser687, and Ser721. Residues 494 to 529 are disordered; that stretch reads SSKSEKELKNRRKKKKQKEQSGEEEKNDRVRKSESE. Residues 511–529 are compositionally biased toward basic and acidic residues; that stretch reads KEQSGEEEKNDRVRKSESE. The interval 590-610 is disordered; it reads ENDFADDEHSTFEDNDSRRDS. The segment covering 596 to 610 has biased composition (basic and acidic residues); it reads DEHSTFEDNDSRRDS. Residues 741–1013 form an II repeat; that stretch reads CCKPWLKVKH…QIAVGRMQKG (273 aa). The helical transmembrane segment at 760 to 778 threads the bilayer; the sequence is FVDLAITICIVLNTLFMAM. Residues 779-789 lie on the Extracellular side of the membrane; it reads EHYPMTEQFSS. Residues 790-809 traverse the membrane as a helical segment; that stretch reads VLSVGNLVFTGIFTAEMFLK. Topologically, residues 810-823 are cytoplasmic; it reads IIAMDPYYYFQEGW. A helical membrane pass occupies residues 824–843; it reads NIFDGFIVSLSLMELGLANV. Residues 844 to 845 lie on the Extracellular side of the membrane; that stretch reads EG. A helical membrane pass occupies residues 846–863; sequence LSVLRSFRLLRVFKLAKS. Over 864–879 the chain is Cytoplasmic; it reads WPTLNMLIKIIGNSVG. The chain crosses the membrane as a helical span at residues 880 to 898; that stretch reads ALGNLTLVLAIIVFIFAVV. Over 899–927 the chain is Extracellular; sequence GMQLFGKSYKECVCKISNDCELPRWHMHD. A disulfide bridge connects residues Cys912 and Cys918. Residues 917–918 form a binds SCN2B region; sequence DC. Residues 928–948 constitute an intramembrane region (pore-forming); the sequence is FFHSFLIVFRVLCGEWIETMW. The Extracellular portion of the chain corresponds to 949–961; sequence DCMEVAGQTMCLT. A disulfide bridge connects residues Cys950 and Cys959. A helical transmembrane segment spans residues 962-982; that stretch reads VFMMVMVIGNLVVLNLFLALL. Topologically, residues 983-1209 are cytoplasmic; the sequence is LSSFSSDNLA…TCYKIVEHNW (227 aa). Residues 1120 to 1165 form a disordered region; sequence EEFSSESDMEESKEKLNATSSSEGSTVDIGAPAEGEQPEVEPEESL. Over residues 1155–1165 the composition is skewed to acidic residues; that stretch reads EQPEVEPEESL. The III repeat unit spans residues 1190-1504; it reads KGKLWWNLRK…KKYYNAMKKL (315 aa). The helical transmembrane segment at 1210–1227 threads the bilayer; sequence FETFIVFMILLSSGALAF. Residues 1228–1240 are Extracellular-facing; the sequence is EDIYIEQRKTIKT. Residues 1241–1259 traverse the membrane as a helical segment; sequence MLEYADKVFTYIFILEMLL. The Cytoplasmic portion of the chain corresponds to 1260–1273; sequence KWVAYGFQVYFTNA. The helical transmembrane segment at 1274-1292 threads the bilayer; the sequence is WCWLDFLIVDVSLVSLTAN. The Extracellular portion of the chain corresponds to 1293 to 1300; that stretch reads ALGYSELG. The chain crosses the membrane as a helical span at residues 1301–1319; that stretch reads AIKSLRTLRALRPLRALSR. At 1320-1336 the chain is on the cytoplasmic side; the sequence is FEGMRVVVNALLGAIPS. Residues 1337–1356 form a helical membrane-spanning segment; the sequence is IMNVLLVCLIFWLIFSIMGV. Residues 1357–1408 lie on the Extracellular side of the membrane; it reads NLFAGKFYHCINYTTGEMFDVSVVNNYSECKALIESNQTARWKNVKVNFDNV. A disulfide bridge connects residues Cys1366 and Cys1386. Residues Asn1368, Asn1382, and Asn1393 are each glycosylated (N-linked (GlcNAc...) asparagine). An intramembrane region (pore-forming) is located at residues 1409–1430; it reads GLGYLSLLQVATFKGWMDIMYA. At 1431-1447 the chain is on the extracellular side; sequence AVDSRNVELQPKYEDNL. The helical transmembrane segment at 1448–1469 threads the bilayer; it reads YMYLYFVIFIIFGSFFTLNLFI. The Cytoplasmic segment spans residues 1470–1532; that stretch reads GVIIDNFNQQ…MVFDFVTKQV (63 aa). Ser1506 carries the post-translational modification Phosphoserine; by PKC. The IV repeat unit spans residues 1513–1811; that stretch reads IPRPANKFQG…WEKFDPDATQ (299 aa). The chain crosses the membrane as a helical span at residues 1533 to 1550; the sequence is FDISIMILICLNMVTMMV. Over 1551–1561 the chain is Extracellular; the sequence is ETDDQSQEMTN. Residues 1562–1580 traverse the membrane as a helical segment; it reads ILYWINLVFIVLFTGECVL. Residues 1581 to 1592 are Cytoplasmic-facing; sequence KLISLRYYYFTI. Residues 1593 to 1610 traverse the membrane as a helical segment; sequence GWNIFDFVVVILSIVGMF. The Extracellular segment spans residues 1611-1623; sequence LAELIEKYFVSPT. A helical transmembrane segment spans residues 1624 to 1640; it reads LFRVIRLARIGRILRLI. Over 1641–1659 the chain is Cytoplasmic; that stretch reads KGAKGIRTLLFALMMSLPA. The helical transmembrane segment at 1660-1677 threads the bilayer; sequence LFNIGLLLFLVMFIYAIF. Residues 1678-1699 lie on the Extracellular side of the membrane; sequence GMSNFAYVKREVGIDDMFNFET. An intramembrane region (pore-forming) is located at residues 1700-1722; the sequence is FGNSMICLFQITTSAGWDGLLAP. Residues 1723-1752 lie on the Extracellular side of the membrane; it reads ILNSGPPDCDPDKDHPGSSVKGDCGNPSVG. Cys1731 and Cys1746 are disulfide-bonded. A helical membrane pass occupies residues 1753–1775; it reads IFFFVSYIIISFLVVVNMYIAVI. Residues 1776 to 2005 lie on the Cytoplasmic side of the membrane; it reads LENFSVATEE…KGKDIRESKK (230 aa). The 30-residue stretch at 1905–1934 folds into the IQ domain; the sequence is EEVSAIIIQRAYRRYLLKQKVKKVSSIYKK. Ser1930 carries the phosphoserine modification. Basic and acidic residues predominate over residues 1935–1964; the sequence is DKGKECDGTPIKEDTLIDKLNENSTPEKTD. The tract at residues 1935 to 2005 is disordered; sequence DKGKECDGTP…KGKDIRESKK (71 aa). Thr1943, Thr1963, and Thr1966 each carry phosphothreonine. Ser1971 carries the phosphoserine modification. Basic and acidic residues predominate over residues 1979–2005; the sequence is TKPEKEKFEKDKSEKEDKGKDIRESKK.

It belongs to the sodium channel (TC 1.A.1.10) family. Nav1.2/SCN2A subfamily. As to quaternary structure, heterooligomer of a large alpha subunit and a smaller beta subunit. Heterooligomer with SCN2B or SCN4B; disulfide-linked. Heterooligomer with SCN1B or SCN3B; non-covalently linked. Interacts with NEDD4L. Interacts with CALM. Interacts with TMEM233. Interacts with the conotoxin GVIIJ. Interacts with the spider beta/delta-theraphotoxin-Pre1a. Interacts with the conotoxin KIIIA. Interacts with the spider protoxin-II. May be ubiquitinated by NEDD4L; which would promote its endocytosis. In terms of processing, phosphorylation at Ser-1506 by PKC in a highly conserved cytoplasmic loop slows inactivation of the sodium channel and reduces peak sodium currents. Post-translationally, sumoylated at Lys-38. Sumoylation is induced by hypoxia, increases voltage-gated sodium current and mediates the early response to acute hypoxia in neurons. Sumoylated SCN2A is located at the cell membrane.

The protein localises to the cell membrane. The enzyme catalyses Na(+)(in) = Na(+)(out). In terms of biological role, mediates the voltage-dependent sodium ion permeability of excitable membranes. Assuming opened or closed conformations in response to the voltage difference across the membrane, the protein forms a sodium-selective channel through which Na(+) ions may pass in accordance with their electrochemical gradient. Implicated in the regulation of hippocampal replay occurring within sharp wave ripples (SPW-R) important for memory. The protein is Sodium channel protein type 2 subunit alpha of Homo sapiens (Human).